The chain runs to 737 residues: Zinc finger protein 585A (737 aa).

The KRAB domain occupies 1–65 (MAAPTREEWR…QGERPRQSCP (65 aa)). C2H2-type zinc fingers lie at residues 126–148 (YVCI…QKTH), 154–176 (FKCN…QRIH), 182–204 (YECS…EKIH), 210–232 (HECT…QKIH), 238–260 (YICI…RRIH), and 266–288 (YECS…QRVH). The C2H2-type 7; degenerate zinc-finger motif lies at 294-316 (YICTEYGKVFSNNSNLITHKKVQ). 15 consecutive C2H2-type zinc fingers follow at residues 322–344 (SICT…QRIH), 350–372 (YACS…QRIH), 378–400 (YICM…QIIH), 406–428 (YKCG…KRIH), 434–456 (YMCN…QKTH), 462–484 (YICS…QRIH), 490–512 (YECS…QKIH), 518–540 (YECH…QKIH), 546–568 (YVCT…QRIH), 574–596 (YECS…QPLH), 602–624 (YVCA…QKTH), 630–652 (YICS…HRIH), 658–680 (YECS…QRIH), 686–708 (YVCA…QTTH), and 714–736 (YKCG…QSNH).

Belongs to the krueppel C2H2-type zinc-finger protein family.

The protein localises to the nucleus. Functionally, may be involved in transcriptional regulation. This chain is Zinc finger protein 585A (ZNF585A), found in Pongo abelii (Sumatran orangutan).